A 151-amino-acid polypeptide reads, in one-letter code: UPF0735 ACT domain-containing protein SH1278 (151 aa).

One can recognise an ACT domain in the interval 74 to 149 (TLILYVNDIV…HVSKVELISM (76 aa)).

The protein belongs to the UPF0735 family.

This is UPF0735 ACT domain-containing protein SH1278 from Staphylococcus haemolyticus (strain JCSC1435).